The chain runs to 158 residues: C-type lectin lectoxin-Enh7 (158 aa).

Positions M1–G23 are cleaved as a signal peptide. 3 disulfides stabilise this stretch: C26–C37, C54–C154, and C129–C146. One can recognise a C-type lectin domain in the interval R33–Q155. The short motif at E119–N121 is the Mannose-binding element. Ca(2+)-binding residues include E127, N142, and D143.

Belongs to the true venom lectin family. In terms of tissue distribution, expressed by the venom gland.

The protein resides in the secreted. Its function is as follows. Mannose-binding lectin which recognizes specific carbohydrate structures and agglutinates a variety of animal cells by binding to cell-surface glycoproteins and glycolipids. May be a calcium-dependent lectin. In Pseudoferania polylepis (Macleay's water snake), this protein is C-type lectin lectoxin-Enh7.